The primary structure comprises 744 residues: Glucosamine inositolphosphorylceramide transferase 1 (744 aa).

The next 3 membrane-spanning stretches (helical) occupy residues 31–51 (FLVA…WLVV), 378–398 (SLFG…VGFV), and 460–480 (LFFC…VHFL). Residues asparagine 534, 558–563 (NSLNNR), 579–581 (DDD), arginine 609, and 665–669 (FNCED) each bind substrate. Position 581 (aspartate 581) interacts with Mn(2+). Cysteine 667 and cysteine 718 form a disulfide bridge. Residue aspartate 669 is part of the active site.

The protein belongs to the glycosyltransferase 64 family. Mn(2+) serves as cofactor. Highly expressed in almost all tissues.

The protein resides in the membrane. It participates in sphingolipid metabolism. Its function is as follows. Essential protein. Glycosyltransferase that mediates the glycosylation of glycosylinositol phosphorylceramides (GIPCs), the major sphingolipids in the plasma membrane; acts as a HexN(Ac)-specific GIPC sugar transferase. Responsible for the glycosylation of a subgroup of GIPCs found in seeds and pollen that contain GlcNAc and GlcN (GlcN(Ac)). Maybe involved in the maintenance of cell-cell adhesion. The polypeptide is Glucosamine inositolphosphorylceramide transferase 1 (Oryza sativa subsp. japonica (Rice)).